Consider the following 115-residue polypeptide: NADH-ubiquinone oxidoreductase chain 3 (115 aa).

The next 3 helical transmembrane spans lie at isoleucine 3–tryptophan 23, phenylalanine 55–leucine 75, and threonine 86–tryptophan 106.

It belongs to the complex I subunit 3 family. In terms of assembly, core subunit of respiratory chain NADH dehydrogenase (Complex I) which is composed of 45 different subunits. Interacts with TMEM186. Interacts with TMEM242.

Its subcellular location is the mitochondrion inner membrane. The enzyme catalyses a ubiquinone + NADH + 5 H(+)(in) = a ubiquinol + NAD(+) + 4 H(+)(out). Its function is as follows. Core subunit of the mitochondrial membrane respiratory chain NADH dehydrogenase (Complex I) which catalyzes electron transfer from NADH through the respiratory chain, using ubiquinone as an electron acceptor. Essential for the catalytic activity of complex I. The protein is NADH-ubiquinone oxidoreductase chain 3 of Sus scrofa (Pig).